A 102-amino-acid polypeptide reads, in one-letter code: Small ribosomal subunit protein eS24 (102 aa).

The protein belongs to the eukaryotic ribosomal protein eS24 family.

The protein is Small ribosomal subunit protein eS24 of Halorubrum lacusprofundi (strain ATCC 49239 / DSM 5036 / JCM 8891 / ACAM 34).